The chain runs to 887 residues: Pyruvate dehydrogenase E1 component (887 aa).

Mg(2+) is bound by residues aspartate 231, asparagine 261, and glutamine 263. The residue at position 716 (lysine 716) is an N6-acetyllysine.

In terms of assembly, homodimer. Part of the PDH complex, consisting of multiple copies of pyruvate dehydrogenase (E1), dihydrolipoamide acetyltransferase (E2) and lipoamide dehydrogenase (E3). Mg(2+) is required as a cofactor. It depends on thiamine diphosphate as a cofactor.

It catalyses the reaction N(6)-[(R)-lipoyl]-L-lysyl-[protein] + pyruvate + H(+) = N(6)-[(R)-S(8)-acetyldihydrolipoyl]-L-lysyl-[protein] + CO2. In terms of biological role, component of the pyruvate dehydrogenase (PDH) complex, that catalyzes the overall conversion of pyruvate to acetyl-CoA and CO(2). In Escherichia coli O157:H7, this protein is Pyruvate dehydrogenase E1 component (aceE).